The following is a 158-amino-acid chain: S-ribosylhomocysteine lyase (158 aa).

Fe cation-binding residues include His55, His59, and Cys127.

It belongs to the LuxS family. In terms of assembly, homodimer. Fe cation is required as a cofactor.

It carries out the reaction S-(5-deoxy-D-ribos-5-yl)-L-homocysteine = (S)-4,5-dihydroxypentane-2,3-dione + L-homocysteine. Functionally, involved in the synthesis of autoinducer 2 (AI-2) which is secreted by bacteria and is used to communicate both the cell density and the metabolic potential of the environment. The regulation of gene expression in response to changes in cell density is called quorum sensing. Catalyzes the transformation of S-ribosylhomocysteine (RHC) to homocysteine (HC) and 4,5-dihydroxy-2,3-pentadione (DPD). The protein is S-ribosylhomocysteine lyase of Geobacillus thermodenitrificans (strain NG80-2).